The primary structure comprises 126 residues: Glycine cleavage system H protein (126 aa).

A Lipoyl-binding domain is found at 22–104; that stretch reads IAYVGITDYA…YGKGWLIKIK (83 aa). Lysine 63 carries the post-translational modification N6-lipoyllysine.

Belongs to the GcvH family. The glycine cleavage system is composed of four proteins: P, T, L and H. Requires (R)-lipoate as cofactor.

The glycine cleavage system catalyzes the degradation of glycine. The H protein shuttles the methylamine group of glycine from the P protein to the T protein. This Phocaeicola vulgatus (strain ATCC 8482 / DSM 1447 / JCM 5826 / CCUG 4940 / NBRC 14291 / NCTC 11154) (Bacteroides vulgatus) protein is Glycine cleavage system H protein.